Here is a 300-residue protein sequence, read N- to C-terminus: HTH-type transcriptional regulator ArgP (300 aa).

Positions 4–60 constitute an HTH lysR-type domain; sequence PDYRTLQALDAVIRERGFERAAQKLCITQSAVSQRIKQLENLFGQPLLVRTVPPRPT. A DNA-binding region (H-T-H motif) is located at residues 21–40; sequence FERAAQKLCITQSAVSQRIK.

This sequence belongs to the LysR transcriptional regulatory family. In terms of assembly, homodimer.

Controls the transcription of genes involved in arginine and lysine metabolism. The chain is HTH-type transcriptional regulator ArgP from Photorhabdus laumondii subsp. laumondii (strain DSM 15139 / CIP 105565 / TT01) (Photorhabdus luminescens subsp. laumondii).